The primary structure comprises 423 residues: Salicylate 5-hydroxylase, large oxygenase component (423 aa).

Residues 1–20 are disordered; it reads MSEPQRLKPVFPQDPKWPGE. The Rieske domain occupies 49–168; it reads WCYVGLEAEI…VAARGGAVFA (120 aa). [2Fe-2S] cluster is bound by residues Cys-91, His-93, Cys-111, and His-114. Residues His-224, His-229, and Asp-370 each contribute to the Fe cation site.

This sequence belongs to the bacterial ring-hydroxylating dioxygenase alpha subunit family. In terms of assembly, the salicylate 5-hydroxylase (S5H) multicomponent enzyme system is composed of an electron transfer component and an oxygenase component. The electron transfer component is comprised of a ferredoxin reductase (NagAa) and a ferredoxin (NagAb), and the oxygenase component is formed by a large subunit (NagG) and a small subunit (NagH). Fe cation is required as a cofactor. It depends on [2Fe-2S] cluster as a cofactor.

The enzyme catalyses salicylate + NADH + O2 + H(+) = 2,5-dihydroxybenzoate + NAD(+) + H2O. It functions in the pathway aromatic compound metabolism; naphthalene degradation. Oxygenase component of the salicylate 5-hydroxylase (S5H) multicomponent enzyme system which catalyzes the 5-hydroxylation of salicylate to gentisate. Active only on substrates with a ring-substituted carboxylate group with an adjacent hydroxyl group. Primarily active against salicylate and substituted salicylates, but not against 2-hydroxycinnamate, 3-hydroxycinnamate, 2-hydroxyphenylacetate, 3-hydroxyphenylacetate, 2-hydroxybenzophenone, 1-hydroxy-2-naphthoate, 4-methoxysalicylate or 2-hydroxyacetophenone. The protein is Salicylate 5-hydroxylase, large oxygenase component of Ralstonia sp.